The primary structure comprises 253 residues: 1-(5-phosphoribosyl)-5-[(5-phosphoribosylamino)methylideneamino] imidazole-4-carboxamide isomerase (253 aa).

D8 functions as the Proton acceptor in the catalytic mechanism. The active-site Proton donor is D131.

It belongs to the HisA/HisF family.

It localises to the cytoplasm. The enzyme catalyses 1-(5-phospho-beta-D-ribosyl)-5-[(5-phospho-beta-D-ribosylamino)methylideneamino]imidazole-4-carboxamide = 5-[(5-phospho-1-deoxy-D-ribulos-1-ylimino)methylamino]-1-(5-phospho-beta-D-ribosyl)imidazole-4-carboxamide. The protein operates within amino-acid biosynthesis; L-histidine biosynthesis; L-histidine from 5-phospho-alpha-D-ribose 1-diphosphate: step 4/9. The protein is 1-(5-phosphoribosyl)-5-[(5-phosphoribosylamino)methylideneamino] imidazole-4-carboxamide isomerase of Polynucleobacter necessarius subsp. necessarius (strain STIR1).